We begin with the raw amino-acid sequence, 471 residues long: Siroheme synthase 1 (471 aa).

Residues 1–203 (MDYLPLFAEL…GNSAEAEKAL (203 aa)) are precorrin-2 dehydrogenase /sirohydrochlorin ferrochelatase. Residues 22-23 (EI) and 43-44 (ET) each bind NAD(+). S128 is subject to Phosphoserine. Positions 215 to 471 (GEIILVGAGP…GFNASVVNLA (257 aa)) are uroporphyrinogen-III C-methyltransferase. P224 lines the S-adenosyl-L-methionine pocket. The Proton acceptor role is filled by D247. K269 serves as the catalytic Proton donor. S-adenosyl-L-methionine-binding positions include 300–302 (GGD), I305, 330–331 (TA), M382, and G411.

The protein in the N-terminal section; belongs to the precorrin-2 dehydrogenase / sirohydrochlorin ferrochelatase family. It in the C-terminal section; belongs to the precorrin methyltransferase family.

It catalyses the reaction uroporphyrinogen III + 2 S-adenosyl-L-methionine = precorrin-2 + 2 S-adenosyl-L-homocysteine + H(+). The enzyme catalyses precorrin-2 + NAD(+) = sirohydrochlorin + NADH + 2 H(+). It carries out the reaction siroheme + 2 H(+) = sirohydrochlorin + Fe(2+). It functions in the pathway cofactor biosynthesis; adenosylcobalamin biosynthesis; precorrin-2 from uroporphyrinogen III: step 1/1. It participates in cofactor biosynthesis; adenosylcobalamin biosynthesis; sirohydrochlorin from precorrin-2: step 1/1. Its pathway is porphyrin-containing compound metabolism; siroheme biosynthesis; precorrin-2 from uroporphyrinogen III: step 1/1. The protein operates within porphyrin-containing compound metabolism; siroheme biosynthesis; siroheme from sirohydrochlorin: step 1/1. It functions in the pathway porphyrin-containing compound metabolism; siroheme biosynthesis; sirohydrochlorin from precorrin-2: step 1/1. In terms of biological role, multifunctional enzyme that catalyzes the SAM-dependent methylations of uroporphyrinogen III at position C-2 and C-7 to form precorrin-2 via precorrin-1. Then it catalyzes the NAD-dependent ring dehydrogenation of precorrin-2 to yield sirohydrochlorin. Finally, it catalyzes the ferrochelation of sirohydrochlorin to yield siroheme. This is Siroheme synthase 1 from Klebsiella pneumoniae subsp. pneumoniae (strain ATCC 700721 / MGH 78578).